A 194-amino-acid chain; its full sequence is E3 ubiquitin-protein ligase RNF185 (194 aa).

Positions 1-32 are disordered; sequence MASKGPTTSASTKSSSTGGTSGSSSSNGAGDN. Residues 31-82 form a required for ubiquitin ligase activity and protection against ER stress-induced cell death region; sequence DNTNQDNTFECNICLDTAKDAVISLCGHLFCWPCLHQWLETRPNRQVCPVCK. Residues 41-82 form an RING-type zinc finger; the sequence is CNICLDTAKDAVISLCGHLFCWPCLHQWLETRPNRQVCPVCK. The interval 92-125 is disordered; sequence PLYGRGSTGQQDPREKTPPRPQGQRPEPENRGGF. 2 consecutive transmembrane segments (helical) span residues 133-153 and 174-194; these read GGFQMSFGIGAFPFGIFATAF and QFLSRLFLFVALVIMFWLLIA.

The protein resides in the mitochondrion outer membrane. The protein localises to the endoplasmic reticulum membrane. The enzyme catalyses S-ubiquitinyl-[E2 ubiquitin-conjugating enzyme]-L-cysteine + [acceptor protein]-L-lysine = [E2 ubiquitin-conjugating enzyme]-L-cysteine + N(6)-ubiquitinyl-[acceptor protein]-L-lysine.. The protein operates within protein modification; protein ubiquitination. E3 ubiquitin-protein ligase that regulates selective mitochondrial autophagy by mediating 'Lys-63'-linked polyubiquitination. Acts in the endoplasmic reticulum (ER)-associated degradation (ERAD) pathway, which targets misfolded proteins that accumulate in the endoplasmic reticulum (ER) for ubiquitination and subsequent proteasome-mediated degradation. Protects cells from ER stress-induced apoptosis. Responsible for the cotranslational ubiquitination and degradation of CFTR in the ERAD pathway. Also acts as a regulator of the innate antiviral response by catalyzing 'Lys-27'-linked polyubiquitination of CGAS, thereby promoting CGAS cyclic GMP-AMP synthase activity. Preferentially associates with the E2 enzymes UBE2J1 and UBE2J2. In Gallus gallus (Chicken), this protein is E3 ubiquitin-protein ligase RNF185 (RNF185).